The following is a 329-amino-acid chain: Fructose-1,6-bisphosphatase class 1 (329 aa).

Mg(2+)-binding residues include Glu-84, Asp-103, Leu-105, and Asp-106. Substrate is bound by residues 106–109 (DGSS), Asn-196, and Lys-262. Residue Glu-268 participates in Mg(2+) binding.

Belongs to the FBPase class 1 family. Homotetramer. Mg(2+) is required as a cofactor.

It localises to the cytoplasm. It catalyses the reaction beta-D-fructose 1,6-bisphosphate + H2O = beta-D-fructose 6-phosphate + phosphate. The protein operates within carbohydrate biosynthesis; gluconeogenesis. The protein is Fructose-1,6-bisphosphatase class 1 of Shewanella halifaxensis (strain HAW-EB4).